Consider the following 411-residue polypeptide: Tyrosine--tRNA ligase (411 aa).

Y33 is a binding site for L-tyrosine. The 'HIGH' region motif lies at P38 to N47. Residues Y160 and Q164 each contribute to the L-tyrosine site. The 'KMSKS' region motif lies at K222 to S226. K225 is a binding site for ATP. The S4 RNA-binding domain maps to V346 to V410.

This sequence belongs to the class-I aminoacyl-tRNA synthetase family. TyrS type 1 subfamily. As to quaternary structure, homodimer.

Its subcellular location is the cytoplasm. It catalyses the reaction tRNA(Tyr) + L-tyrosine + ATP = L-tyrosyl-tRNA(Tyr) + AMP + diphosphate + H(+). In terms of biological role, catalyzes the attachment of tyrosine to tRNA(Tyr) in a two-step reaction: tyrosine is first activated by ATP to form Tyr-AMP and then transferred to the acceptor end of tRNA(Tyr). In Mycoplasmopsis synoviae (strain 53) (Mycoplasma synoviae), this protein is Tyrosine--tRNA ligase.